A 399-amino-acid polypeptide reads, in one-letter code: Imidazolonepropionase (399 aa).

The Fe(3+) site is built by His-68 and His-70. Positions 68 and 70 each coordinate Zn(2+). Residues Arg-77, Tyr-140, and His-173 each coordinate 4-imidazolone-5-propanoate. Tyr-140 provides a ligand contact to N-formimidoyl-L-glutamate. His-238 is a Fe(3+) binding site. A Zn(2+)-binding site is contributed by His-238. Position 241 (Gln-241) interacts with 4-imidazolone-5-propanoate. Residue Asp-313 participates in Fe(3+) binding. Asp-313 provides a ligand contact to Zn(2+). Positions 315 and 317 each coordinate N-formimidoyl-L-glutamate. 4-imidazolone-5-propanoate is bound at residue Thr-318.

The protein belongs to the metallo-dependent hydrolases superfamily. HutI family. Zn(2+) serves as cofactor. Fe(3+) is required as a cofactor.

The protein localises to the cytoplasm. It catalyses the reaction 4-imidazolone-5-propanoate + H2O = N-formimidoyl-L-glutamate. The protein operates within amino-acid degradation; L-histidine degradation into L-glutamate; N-formimidoyl-L-glutamate from L-histidine: step 3/3. Functionally, catalyzes the hydrolytic cleavage of the carbon-nitrogen bond in imidazolone-5-propanoate to yield N-formimidoyl-L-glutamate. It is the third step in the universal histidine degradation pathway. In Rhizorhabdus wittichii (strain DSM 6014 / CCUG 31198 / JCM 15750 / NBRC 105917 / EY 4224 / RW1) (Sphingomonas wittichii), this protein is Imidazolonepropionase.